Here is a 305-residue protein sequence, read N- to C-terminus: Porphobilinogen deaminase (305 aa).

Cysteine 241 carries the S-(dipyrrolylmethanemethyl)cysteine modification.

Belongs to the HMBS family. As to quaternary structure, monomer. Dipyrromethane is required as a cofactor.

The catalysed reaction is 4 porphobilinogen + H2O = hydroxymethylbilane + 4 NH4(+). Its pathway is porphyrin-containing compound metabolism; protoporphyrin-IX biosynthesis; coproporphyrinogen-III from 5-aminolevulinate: step 2/4. Functionally, tetrapolymerization of the monopyrrole PBG into the hydroxymethylbilane pre-uroporphyrinogen in several discrete steps. The sequence is that of Porphobilinogen deaminase from Exiguobacterium sp. (strain ATCC BAA-1283 / AT1b).